An 84-amino-acid polypeptide reads, in one-letter code: Cell division topological specificity factor (84 aa).

Belongs to the MinE family.

Prevents the cell division inhibition by proteins MinC and MinD at internal division sites while permitting inhibition at polar sites. This ensures cell division at the proper site by restricting the formation of a division septum at the midpoint of the long axis of the cell. This is Cell division topological specificity factor from Paraburkholderia phytofirmans (strain DSM 17436 / LMG 22146 / PsJN) (Burkholderia phytofirmans).